The primary structure comprises 262 residues: Polyamine aminopropyltransferase (262 aa).

The PABS domain maps to Met1–Pro249. Residue Asn29 coordinates S-methyl-5'-thioadenosine. Asp83 lines the spermidine pocket. Catalysis depends on Asp155, which acts as the Proton acceptor.

As to quaternary structure, homodimer.

The protein resides in the cytoplasm. It catalyses the reaction S-adenosyl 3-(methylsulfanyl)propylamine + putrescine = S-methyl-5'-thioadenosine + spermidine + H(+). Its pathway is amine and polyamine biosynthesis; spermidine biosynthesis; spermidine from putrescine: step 1/1. Its activity is regulated as follows. Inhibited by methylglyoxal bis(cyclopentylamidinohydrazone)(MGBCP). In terms of biological role, involved in the cell growth and proliferation. Catalyzes the irreversible transfer of a propylamine group from the amino donor S-adenosylmethioninamine (decarboxy-AdoMet) to putrescine (1,4-diaminobutane) to yield spermidine. Spermidine cannot be used as an aminopropyl acceptor. This Helicobacter pylori (strain ATCC 700392 / 26695) (Campylobacter pylori) protein is Polyamine aminopropyltransferase.